The following is a 457-amino-acid chain: Ribulose bisphosphate carboxylase large chain (457 aa).

Positions M1–S2 are excised as a propeptide. An N-acetylproline modification is found at P3. N6,N6,N6-trimethyllysine is present on K14. Residues N123 and T173 each contribute to the substrate site. K175 functions as the Proton acceptor in the catalytic mechanism. A substrate-binding site is contributed by K177. Mg(2+) is bound by residues K201, D203, and E204. K201 carries the post-translational modification N6-carboxylysine. Residue H294 is the Proton acceptor of the active site. 3 residues coordinate substrate: R295, H327, and S379.

This sequence belongs to the RuBisCO large chain family. Type I subfamily. Heterohexadecamer of 8 large chains and 8 small chains; disulfide-linked. The disulfide link is formed within the large subunit homodimers. The cofactor is Mg(2+). Post-translationally, the disulfide bond which can form in the large chain dimeric partners within the hexadecamer appears to be associated with oxidative stress and protein turnover.

The protein localises to the plastid. It localises to the chloroplast. The enzyme catalyses 2 (2R)-3-phosphoglycerate + 2 H(+) = D-ribulose 1,5-bisphosphate + CO2 + H2O. The catalysed reaction is D-ribulose 1,5-bisphosphate + O2 = 2-phosphoglycolate + (2R)-3-phosphoglycerate + 2 H(+). Its function is as follows. RuBisCO catalyzes two reactions: the carboxylation of D-ribulose 1,5-bisphosphate, the primary event in carbon dioxide fixation, as well as the oxidative fragmentation of the pentose substrate in the photorespiration process. Both reactions occur simultaneously and in competition at the same active site. The polypeptide is Ribulose bisphosphate carboxylase large chain (Phelline comosa).